Here is a 431-residue protein sequence, read N- to C-terminus: MGMTITEKIIAAHAGRDYVEPGELVTVKVDLAIANDITAPLAIKQLEKYGIDKVHDPNKIALVMDHFFPPKDIMSAQQIKISRDFAKKMGIKNYFEGQDSGVMHTLLPEKGFVVPGDLVIGADSHTCTYGGIGAFSTGVGSTDIAYIWATGETWLRVPESMKFVFYNKPQKWVGGKDFVLTVIGKIGVDGALYKAMEYQGEAIRALDIDNRLTIANMAIEAGGKSGIIEPDEKTVDWVRKRTNREFKLYKSDPDAKYCCEYEFDASKIEPVVACPSLPSNVKPVSEVAGTHIDQVFIGSCTNGRLSDLRIAAAILKSKKVHPEVRCIVIPASDQIYKQALHEGIIEILADAGCLISTSTCGPCLGGHMGILAEGEVCLSTSNRNFVGRMGHPKSQVYLSSPAVAAASAVLGRIAHPDEVAKYEEVETLITL.

C300, C360, and C363 together coordinate [4Fe-4S] cluster.

Belongs to the aconitase/IPM isomerase family. LeuC type 2 subfamily. As to quaternary structure, heterodimer of LeuC and LeuD. It depends on [4Fe-4S] cluster as a cofactor.

The catalysed reaction is (2R,3S)-3-isopropylmalate = (2S)-2-isopropylmalate. It functions in the pathway amino-acid biosynthesis; L-leucine biosynthesis; L-leucine from 3-methyl-2-oxobutanoate: step 2/4. Functionally, catalyzes the isomerization between 2-isopropylmalate and 3-isopropylmalate, via the formation of 2-isopropylmaleate. This chain is 3-isopropylmalate dehydratase large subunit, found in Sulfurihydrogenibium sp. (strain YO3AOP1).